Consider the following 608-residue polypeptide: Nuclear protein localization protein 4 homolog (608 aa).

The residue at position 2 (alanine 2) is an N-acetylalanine. Lysine 179 is modified (N6-acetyllysine). The region spanning isoleucine 226–phenylalanine 363 is the MPN domain. The segment at threonine 580–threonine 608 adopts a RanBP2-type zinc-finger fold.

The protein belongs to the NPL4 family. Heterodimer with UFD1. The heterodimer binds ubiquitinated proteins. The heterodimer binds to VCP and inhibits Golgi membrane fusion. Interacts with ZFAND2B; probably through VCP. Expressed at highest levels in brain, heart, skeletal muscle, kidney and fetal liver.

It is found in the cytoplasm. The protein resides in the cytosol. Its subcellular location is the endoplasmic reticulum. The protein localises to the nucleus. It participates in protein degradation; proteasomal ubiquitin-dependent pathway. Its function is as follows. The ternary complex containing UFD1, VCP and NPLOC4 binds ubiquitinated proteins and is necessary for the export of misfolded proteins from the ER to the cytoplasm, where they are degraded by the proteasome. The NPLOC4-UFD1-VCP complex regulates spindle disassembly at the end of mitosis and is necessary for the formation of a closed nuclear envelope. Acts as a negative regulator of type I interferon production via the complex formed with VCP and UFD1, which binds to RIGI and recruits RNF125 to promote ubiquitination and degradation of RIGI. The sequence is that of Nuclear protein localization protein 4 homolog (NPLOC4) from Homo sapiens (Human).